A 144-amino-acid polypeptide reads, in one-letter code: MIKLEYLQDPSPRKRRTKLLGRGPSSGHGKTSGRGHKGDGSRSGYKRRFGYEGGGVPLYRRVPTRGFSHKRFDKCVEEITTQRLNGIFENGEEVSLETLKQRKVIHRETSRVKVILKGALDKKLVWKDAAIVLSEGVKSLIETV.

The tract at residues 1 to 48 is disordered; sequence MIKLEYLQDPSPRKRRTKLLGRGPSSGHGKTSGRGHKGDGSRSGYKRR.

It belongs to the universal ribosomal protein uL15 family. As to quaternary structure, part of the 50S ribosomal subunit.

Its function is as follows. Binds to the 23S rRNA. In Chlamydia muridarum (strain MoPn / Nigg), this protein is Large ribosomal subunit protein uL15.